A 930-amino-acid chain; its full sequence is Probable SapB synthase (930 aa).

The 261-residue stretch at 256-516 (YTVESALHFS…GSTRADETTR (261 aa)) folds into the Protein kinase domain. ATP-binding positions include 262-270 (LHFSNGGGV) and Lys285. Asp395 functions as the Proton acceptor in the catalytic mechanism. Residues 447–467 (YALACLRIVLFLPLTSLLAVD) traverse the membrane as a helical segment. Over residues 501–527 (GSTRVDGSTRADETTRADETTRLDVTT) the composition is skewed to basic and acidic residues. 2 disordered regions span residues 501–558 (GSTR…RDSM) and 911–930 (PFLP…HQEP). The segment covering 532-546 (APDAARRPAGPVAPV) has biased composition (low complexity). The segment covering 547-556 (RPDDWPRSRD) has biased composition (basic and acidic residues).

It in the N-terminal section; belongs to the protein kinase superfamily.

Its subcellular location is the cell membrane. Functionally, required for aerial hyphae formation. Probably involved in processing the precursor of SapB to its mature form. This is Probable SapB synthase from Streptomyces coelicolor (strain ATCC BAA-471 / A3(2) / M145).